The chain runs to 84 residues: Dolichol phosphate-mannose biosynthesis regulatory protein (84 aa).

Transmembrane regions (helical) follow at residues 11–31 (FGLVAVSLIIFTYYTTWVILL) and 49–69 (YAVLLPLAAGLLLLLFVGLFI).

Belongs to the DPM2 family. As to quaternary structure, component of the dolichol-phosphate mannose (DPM) synthase complex composed of DPM1, DPM2 and DPM3; in the complex interacts directly with DPM3. Component of the glycosylphosphatidylinositol-N-acetylglucosaminyltransferase (GPI-GnT) complex composed at least by PIGA, PIGC, PIGH, PIGP, PIGQ, PIGY and DPM2. Interacts with PIGA, PIGC and PIGQ.

Its subcellular location is the endoplasmic reticulum membrane. It participates in protein modification; protein glycosylation. Functionally, regulates the biosynthesis of dolichol phosphate-mannose. Regulatory subunit of the dolichol-phosphate mannose (DPM) synthase complex; essential for the ER localization and stable expression of DPM1. Part of the glycosylphosphatidylinositol-N-acetylglucosaminyltransferase (GPI-GnT) complex that catalyzes the transfer of N-acetylglucosamine from UDP-N-acetylglucosamine to phosphatidylinositol and participates in the first step of GPI biosynthesis. May act by regulating the GPI-GNT complex. The protein is Dolichol phosphate-mannose biosynthesis regulatory protein of Mus musculus (Mouse).